The sequence spans 273 residues: N(omega)-hydroxy-L-arginine amidinohydrolase (273 aa).

Mn(2+) is bound by residues D109, H111, D113, D198, and D200.

Belongs to the arginase family. It depends on Mn(2+) as a cofactor.

The catalysed reaction is N(omega)-hydroxy-L-arginine + H2O = hydroxyurea + L-ornithine. Its function is as follows. Involved in the biosynthesis of the antibiotic D-cycloserine (DCS), a cyclic structural analog of D-alanine, used as an antitubercular agent. Catalyzes the hydrolysis of N(omega)-hydroxy-L-arginine (NHA) to yield hydroxyurea (HU) and L-ornithine. The sequence is that of N(omega)-hydroxy-L-arginine amidinohydrolase from Streptomyces lavendulae.